An 89-amino-acid chain; its full sequence is MANIKSKVKSIAKQEEFRQRNNAMKTRVRKAIRAAREAVLAKEEGFEKKVFEAHSIIATAVQKGVYHPNKGARKSSRLDHFVNEQKSKQ.

Residues 68-89 (PNKGARKSSRLDHFVNEQKSKQ) are disordered. Positions 76-89 (SRLDHFVNEQKSKQ) are enriched in basic and acidic residues.

Belongs to the bacterial ribosomal protein bS20 family.

Its function is as follows. Binds directly to 16S ribosomal RNA. This Mycoplasmopsis agalactiae (strain NCTC 10123 / CIP 59.7 / PG2) (Mycoplasma agalactiae) protein is Small ribosomal subunit protein bS20.